We begin with the raw amino-acid sequence, 355 residues long: Chromatin modification-related protein EAF3 (355 aa).

The region spanning 3 to 77 (EVGGKCLAYH…WDEWVSVDRI (75 aa)) is the Tudor-knot domain. The disordered stretch occupies residues 98–150 (ASLAQQQKTKNGGSAKRGGGGAHSESNHGGRRSGSGDRRDSNAEERGIVPSEG). Positions 131-144 (GSGDRRDSNAEERG) are enriched in basic and acidic residues. Positions 163-353 (SRNKLRIHIP…TSSQYEGVAL (191 aa)) constitute an MRG domain.

Belongs to the MRG family. As to quaternary structure, component of the NuA4 histone acetyltransferase complex.

It is found in the nucleus. Involved in deacetylation of histones, chromatin assembly and chromosome segregation. May act as a transcriptional oscillator, directing histone deacetylases to specific chromosomal domains. Component of the NuA4 histone acetyltransferase complex which is involved in transcriptional activation of selected genes principally by acetylation of nucleosomal histone H4 and H2A. The NuA4 complex is also involved in DNA repair. The polypeptide is Chromatin modification-related protein EAF3 (EAF3) (Candida glabrata (strain ATCC 2001 / BCRC 20586 / JCM 3761 / NBRC 0622 / NRRL Y-65 / CBS 138) (Yeast)).